The sequence spans 299 residues: 5-azacytidine resistance protein azr1 (299 aa).

Residues 35–293 (KSHFPSPATL…DDTTITCLLI (259 aa)) form the PPM-type phosphatase domain.

In terms of biological role, confers azacytidine resistance in high copy. In Schizosaccharomyces pombe (strain 972 / ATCC 24843) (Fission yeast), this protein is 5-azacytidine resistance protein azr1 (azr1).